The chain runs to 300 residues: Peroxisomal 2,4-dienoyl-CoA reductase [(3E)-enoyl-CoA-producing] (300 aa).

NADP(+) contacts are provided by residues 42–47, 67–71, and aspartate 93; these read GGGSGI and RNLEK. Arginine 67 lines the substrate pocket. Substrate is bound by residues arginine 95, phenylalanine 125, and 133–135; that span reads SFN. NADP(+) contacts are provided by residues lysine 189 and 215–221; that span reads PGPISGT. Substrate is bound at residue arginine 226. Positions 298–300 match the Microbody targeting signal motif; the sequence is AKL.

The protein belongs to the short-chain dehydrogenases/reductases (SDR) family. 2,4-dienoyl-CoA reductase subfamily. Monomer, dimer and oligomer.

It is found in the peroxisome. It carries out the reaction a (2E,4Z)-dienoyl-CoA + NADPH + H(+) = a 4,5-saturated-(3E)-enoyl-CoA + NADP(+). The enzyme catalyses a (2E,4E)-dienoyl-CoA + NADPH + H(+) = a 4,5-saturated-(3E)-enoyl-CoA + NADP(+). The catalysed reaction is (2E,4E)-hexadienoyl-CoA + NADPH + H(+) = (3E)-hexenoyl-CoA + NADP(+). It catalyses the reaction (2E,4E)-decadienoyl-CoA + NADPH + H(+) = (3E)-decenoyl-CoA + NADP(+). It carries out the reaction (2E,4Z,7Z,10Z,13Z,16Z,19Z)-docosaheptaenoyl-CoA + NADPH + H(+) = (3E,7Z,10Z,13Z,16Z,19Z)-docosahexaenoyl-CoA + NADP(+). Its function is as follows. Auxiliary enzyme of beta-oxidation. Participates in the degradation of unsaturated fatty enoyl-CoA esters having double bonds in both even- and odd-numbered positions in peroxisome. Catalyzes the NADP-dependent reduction of 2,4-dienoyl-CoA to yield trans-3-enoyl-CoA. The protein is Peroxisomal 2,4-dienoyl-CoA reductase [(3E)-enoyl-CoA-producing] (decr2) of Danio rerio (Zebrafish).